The following is a 308-amino-acid chain: Alpha/beta hydrolase domain-containing protein WAV2 (308 aa).

A helical membrane pass occupies residues 6 to 26 (SALFYGFGGIVVAGVALLVAF). Active-site charge relay system residues include Ser-159, Asp-243, and Arg-308.

The protein belongs to the serine esterase family. Expressed in roots, rosette leaves, stems and flowers.

The protein localises to the cell membrane. Involved in the regulation of root growth. Involved in the suppression of the root bending in response to touch stimuli, gravity and light. Negatively regulates stimulus-induced root bending through inhibition of root tip rotation. This is Alpha/beta hydrolase domain-containing protein WAV2 from Arabidopsis thaliana (Mouse-ear cress).